Reading from the N-terminus, the 440-residue chain is Elongation factor 1-alpha (440 aa).

A tr-type G domain is found at 5–228 (KPHINLVVIG…ALDTYIQPPK (224 aa)). The segment at 14 to 21 (GHVDHGKS) is G1. 14–21 (GHVDHGKS) is a GTP binding site. Position 21 (Ser-21) interacts with Mg(2+). The segment at 70 to 74 (GVTID) is G2. The segment at 91-94 (DAPG) is G3. Residues 91-95 (DAPGH) and 153-156 (NKMD) contribute to the GTP site. Residues 153–156 (NKMD) form a G4 region. The G5 stretch occupies residues 194 to 196 (SAW).

This sequence belongs to the TRAFAC class translation factor GTPase superfamily. Classic translation factor GTPase family. EF-Tu/EF-1A subfamily.

The protein localises to the cytoplasm. The catalysed reaction is GTP + H2O = GDP + phosphate + H(+). GTP hydrolase that promotes the GTP-dependent binding of aminoacyl-tRNA to the A-site of ribosomes during protein biosynthesis. In Hyperthermus butylicus (strain DSM 5456 / JCM 9403 / PLM1-5), this protein is Elongation factor 1-alpha.